The chain runs to 459 residues: Elongation factor 1-alpha 1 (459 aa).

The tr-type G domain occupies 5–242; sequence KTHINIVVIG…DCIIPPQRPT (238 aa). Residues 14–21 are G1; it reads GHVDSGKS. The segment at 70 to 74 is G2; it reads GITID. The tract at residues 91–94 is G3; it reads DAPG. The segment at 153 to 156 is G4; that stretch reads NKMD. Positions 194 to 196 are G5; it reads SGF. E301 and E374 each carry 5-glutamyl glycerylphosphorylethanolamine.

This sequence belongs to the TRAFAC class translation factor GTPase superfamily. Classic translation factor GTPase family. EF-Tu/EF-1A subfamily.

The protein localises to the cytoplasm. In terms of biological role, this protein promotes the GTP-dependent binding of aminoacyl-tRNA to the A-site of ribosomes during protein biosynthesis. The sequence is that of Elongation factor 1-alpha 1 (eft-1) from Oscheius tipulae.